A 203-amino-acid polypeptide reads, in one-letter code: ATP-dependent Clp protease proteolytic subunit 2 (203 aa).

Ser-100 serves as the catalytic Nucleophile. The active site involves His-125.

Belongs to the peptidase S14 family. As to quaternary structure, fourteen ClpP subunits assemble into 2 heptameric rings which stack back to back to give a disk-like structure with a central cavity, resembling the structure of eukaryotic proteasomes.

Its subcellular location is the cytoplasm. It catalyses the reaction Hydrolysis of proteins to small peptides in the presence of ATP and magnesium. alpha-casein is the usual test substrate. In the absence of ATP, only oligopeptides shorter than five residues are hydrolyzed (such as succinyl-Leu-Tyr-|-NHMec, and Leu-Tyr-Leu-|-Tyr-Trp, in which cleavage of the -Tyr-|-Leu- and -Tyr-|-Trp bonds also occurs).. Functionally, cleaves peptides in various proteins in a process that requires ATP hydrolysis. Has a chymotrypsin-like activity. Plays a major role in the degradation of misfolded proteins. The polypeptide is ATP-dependent Clp protease proteolytic subunit 2 (Nocardia farcinica (strain IFM 10152)).